Here is a 3779-residue protein sequence, read N- to C-terminus: Protein DDB_G0268328 (3779 aa).

Disordered regions lie at residues 24 to 56, 1001 to 1028, 1137 to 1165, 1513 to 1538, 1656 to 1690, 2027 to 2054, 2144 to 2184, 2280 to 2325, 2508 to 2527, 2720 to 2748, 2975 to 3030, and 3427 to 3450; these read RQIK…KDGS, HEDE…DDDD, QDST…QQQQ, PTNS…SLLS, ETTV…NNKE, SNSS…DSNN, NNNN…NNSS, ISTT…NEQQ, QINN…REEG, DGNN…NDSS, ESND…DSIK, and QSNT…SGKL. Low complexity-rich tracts occupy residues 26 to 56, 1011 to 1020, 1149 to 1165, and 1515 to 1538; these read IKSQ…KDGS, DNSNNSNSQD, YYHQ…QQQQ, and NSIY…SLLS. Residues 1656–1671 are compositionally biased toward basic and acidic residues; that stretch reads ETTVLEKETKETKDNN. Residues 1672-1687 show a composition bias toward low complexity; it reads LENNNNNTNNSNNNNN. Low complexity-rich tracts occupy residues 2144-2182 and 2285-2322; these read NNNN…NNNN. 2 stretches are compositionally biased toward low complexity: residues 2722–2745 and 3015–3030; these read NNNN…QNNN and SVNN…DSIK. Over residues 3433–3446 the composition is skewed to gly residues; that stretch reads GTGGGGGNGGGNNG.

The sequence is that of Protein DDB_G0268328 from Dictyostelium discoideum (Social amoeba).